A 205-amino-acid polypeptide reads, in one-letter code: Ras-related protein RABC2b (205 aa).

A GTP-binding site is contributed by 20–27; it reads GDSGVGKS. An Effector region motif is present at residues 41-49; that stretch reads LAPTIGVDF. GTP contacts are provided by residues 67 to 71, 127 to 130, and 157 to 158; these read DTAGQ, NKVD, and SA. Residues cysteine 202 and cysteine 203 are each lipidated (S-geranylgeranyl cysteine).

It belongs to the small GTPase superfamily. Rab family.

Its subcellular location is the cell membrane. Functionally, intracellular vesicle trafficking and protein transport. The polypeptide is Ras-related protein RABC2b (RABC2B) (Arabidopsis thaliana (Mouse-ear cress)).